The sequence spans 432 residues: T-box transcription factor T (432 aa).

The segment at residues 49–217 is a DNA-binding region (T-box); that stretch reads LWTRFKELTN…HNPFAKAFLD (169 aa). Residues 274 to 306 are disordered; sequence CERYSSLRNHRSAPYPSPYTHRNNSPNNLADNS. The segment covering 293 to 306 has biased composition (polar residues); the sequence is THRNNSPNNLADNS.

When not bound to DNA, exists as a monomer. Binds DNA as a dimer. As to expression, expressed in presumptive mesodermal cells around the blastopore, and then in the notochord.

The protein resides in the nucleus. Involved in the transcriptional regulation of genes required for mesoderm formation and differentiation. Binds to the palindromic T site 5'-TTCACACCTAGGTGTGAA-3' DNA sequence. Causes dorsal mesodermal differentiation of animal cap ectoderm when co-expressed with wnt8 and noggin. None of these molecules causes dorsal mesoderm formation when expressed alone. Establishes the left/right axis at early gastrula stage by directly up-regulating mesodermal expression of zic3. The chain is T-box transcription factor T from Xenopus laevis (African clawed frog).